Consider the following 243-residue polypeptide: 4-hydroxy-tetrahydrodipicolinate reductase (243 aa).

NAD(+) is bound by residues 9–14, 78–80, and 104–107; these read GANGKM, GTS, and APNF. His134 acts as the Proton donor/acceptor in catalysis. His135 provides a ligand contact to (S)-2,3,4,5-tetrahydrodipicolinate. Lys138 acts as the Proton donor in catalysis. (S)-2,3,4,5-tetrahydrodipicolinate is bound at residue 144 to 145; sequence GT.

Belongs to the DapB family.

The protein localises to the cytoplasm. The enzyme catalyses (S)-2,3,4,5-tetrahydrodipicolinate + NAD(+) + H2O = (2S,4S)-4-hydroxy-2,3,4,5-tetrahydrodipicolinate + NADH + H(+). The catalysed reaction is (S)-2,3,4,5-tetrahydrodipicolinate + NADP(+) + H2O = (2S,4S)-4-hydroxy-2,3,4,5-tetrahydrodipicolinate + NADPH + H(+). Its pathway is amino-acid biosynthesis; L-lysine biosynthesis via DAP pathway; (S)-tetrahydrodipicolinate from L-aspartate: step 4/4. In terms of biological role, catalyzes the conversion of 4-hydroxy-tetrahydrodipicolinate (HTPA) to tetrahydrodipicolinate. This is 4-hydroxy-tetrahydrodipicolinate reductase from Legionella pneumophila (strain Corby).